A 287-amino-acid chain; its full sequence is Glycine--tRNA ligase alpha subunit (287 aa).

This sequence belongs to the class-II aminoacyl-tRNA synthetase family. Tetramer of two alpha and two beta subunits.

The protein resides in the cytoplasm. The catalysed reaction is tRNA(Gly) + glycine + ATP = glycyl-tRNA(Gly) + AMP + diphosphate. This chain is Glycine--tRNA ligase alpha subunit, found in Campylobacter jejuni subsp. doylei (strain ATCC BAA-1458 / RM4099 / 269.97).